We begin with the raw amino-acid sequence, 531 residues long: Pancreatic secretory granule membrane major glycoprotein GP2 (531 aa).

Residues 1–21 form the signal peptide; it reads MVGCDLLWLAAASCVLTLVSP. An N-linked (GlcNAc...) asparagine glycan is attached at N33. The interval 34–53 is beta hairpin; sequence SSNLDLDCGSPDSPSSGICF. 11 disulfide bridges follow: C41–C52, C56–C151, C79–C169, C101–C139, C107–C174, C132–C140, C184–C194, C188–C203, C205–C235, C223–C314, and C255–C278. The segment at 54–74 is D10C; that stretch reads DPCQNHTVLNDPTRSTENNDS. N-linked (GlcNAc...) asparagine glycosylation is found at N58 and N72. An EGF-like domain is found at 180-224; it reads APKNCEITCRPEEECVFQNNNWSCVCRQDLHVSDSQSLQPLLDCG. N-linked (GlcNAc...) asparagine glycosylation occurs at N200. A ZP-N region spans residues 222 to 315; it reads DCGDNEIKVK…FRVNVNFQCA (94 aa). In terms of domain architecture, ZP spans 222–478; the sequence is DCGDNEIKVK…PSCSTNRLRS (257 aa). Residues N256 and N285 are each glycosylated (N-linked (GlcNAc...) asparagine). Positions 316 to 339 are flexible ZP-N/ZP-C linker; that stretch reads YPLDMSVSLETALQPIVSSLTVDV. An internal hydrophobic patch (IHP) region spans residues 340–351; it reads DGAGEFNVKMAL. The tract at residues 340 to 478 is ZP-C; it reads DGAGEFNVKM…PSCSTNRLRS (139 aa). Cystine bridges form between C395–C455, C416–C471, and C460–C467. Residues 485–493 are external hydrophobic patch (EHP); that stretch reads YNRVLDLGP.

Interacts with SYCN. Interacts with bacterial adhesin fimH. N-glycosylated. As to expression, specifically expressed by M (microfold) cells which are atypical epithelial cells of the intestine.

Its subcellular location is the zymogen granule membrane. It localises to the secreted. It is found in the cell membrane. The protein localises to the apical cell membrane. The protein resides in the membrane raft. Its subcellular location is the endosome. Functionally, functions as an intestinal M-cell transcytotic receptor specific of type-I-piliated bacteria that participates in the mucosal immune response toward these bacteria. At the apical membrane of M-cells it binds fimH, a protein of the bacteria type I pilus tip. Internalizes bound bacteria, like E.coli and S.typhimurium, from the lumen of the intestine and delivers them, through M-cells, to the underlying organized lymphoid follicles where they are captured by antigen-presenting dendritic cells to elicit a mucosal immune response. This is Pancreatic secretory granule membrane major glycoprotein GP2 from Mus musculus (Mouse).